The following is a 794-amino-acid chain: uncharacterized protein (794 aa).

9 helical membrane-spanning segments follow: residues 34-54, 67-87, 99-119, 132-152, 257-277, 283-303, 315-335, 353-373, and 421-441; these read FSAS…VFAV, ITAA…AHLI, MLAD…AFAS, LFLF…ADVT, VGPS…AMGL, LAWI…MFQL, WSVN…VLVF, LGAL…ATLF, and WTGT…LMGV.

The protein localises to the cell membrane. This is an uncharacterized protein from Corynebacterium glutamicum (strain ATCC 13032 / DSM 20300 / JCM 1318 / BCRC 11384 / CCUG 27702 / LMG 3730 / NBRC 12168 / NCIMB 10025 / NRRL B-2784 / 534).